Reading from the N-terminus, the 542-residue chain is CTP synthase (542 aa).

Positions 1–265 are amidoligase domain; sequence MTRYIFVTGG…DDFVVERFGL (265 aa). S13 contacts CTP. S13 contributes to the UTP binding site. Residues 14–19 and D71 each bind ATP; that span reads SLGKGI. Mg(2+) is bound by residues D71 and E139. CTP is bound by residues 146–148, 186–191, and K222; these read DIE and KTKPTQ. UTP-binding positions include 186 to 191 and K222; that span reads KTKPTQ. Residues 290 to 541 enclose the Glutamine amidotransferase type-1 domain; sequence TIAMVGKYME…VKAALAQKNK (252 aa). L-glutamine is bound at residue G351. C378 (nucleophile; for glutamine hydrolysis) is an active-site residue. L-glutamine is bound by residues 379 to 382, E402, and R469; that span reads LGMQ. Catalysis depends on residues H514 and E516.

It belongs to the CTP synthase family. Homotetramer.

It catalyses the reaction UTP + L-glutamine + ATP + H2O = CTP + L-glutamate + ADP + phosphate + 2 H(+). It carries out the reaction L-glutamine + H2O = L-glutamate + NH4(+). The enzyme catalyses UTP + NH4(+) + ATP = CTP + ADP + phosphate + 2 H(+). It functions in the pathway pyrimidine metabolism; CTP biosynthesis via de novo pathway; CTP from UDP: step 2/2. Allosterically activated by GTP, when glutamine is the substrate; GTP has no effect on the reaction when ammonia is the substrate. The allosteric effector GTP functions by stabilizing the protein conformation that binds the tetrahedral intermediate(s) formed during glutamine hydrolysis. Inhibited by the product CTP, via allosteric rather than competitive inhibition. In terms of biological role, catalyzes the ATP-dependent amination of UTP to CTP with either L-glutamine or ammonia as the source of nitrogen. Regulates intracellular CTP levels through interactions with the four ribonucleotide triphosphates. The chain is CTP synthase from Pseudomonas putida (strain ATCC 700007 / DSM 6899 / JCM 31910 / BCRC 17059 / LMG 24140 / F1).